The chain runs to 101 residues: A-type ATP synthase subunit F (101 aa).

This sequence belongs to the V-ATPase F subunit family. Has multiple subunits, A(3), B(3), C, D, E, F, G, I and K(x); there may be a few other subunits as well.

The protein resides in the cell membrane. Functionally, component of the A-type ATP synthase that produces ATP from ADP in the presence of a proton gradient across the membrane. The polypeptide is A-type ATP synthase subunit F (Methanosarcina mazei (strain ATCC BAA-159 / DSM 3647 / Goe1 / Go1 / JCM 11833 / OCM 88) (Methanosarcina frisia)).